Consider the following 349-residue polypeptide: Early nodulin-like protein 2 (349 aa).

The first 28 residues, 1-28 (MTFLKMKSLSFFFTILLSLSTLFTISNA), serve as a signal peptide directing secretion. In terms of domain architecture, Phytocyanin spans 29 to 130 (RKFNVGGSGA…GQKLNVVVIS (102 aa)). The cysteines at positions 84 and 118 are disulfide-linked. The disordered stretch occupies residues 136–330 (TAQSPHAAAP…GQKKSSANGM (195 aa)). 2 stretches are compositionally biased toward low complexity: residues 145 to 201 (PGSS…SPPG) and 224 to 234 (TSPVSPSSAPM). Positions 249-260 (IPPSSAPMTSPP) are enriched in polar residues. Low complexity predominate over residues 263–312 (MAPKSSSPVSNSPTVSPSLAPGGSTSSSPSDSPSGSAMGPSGDGPSAAGD). Ser325 carries the GPI-anchor amidated serine lipid modification. Positions 326–349 (SANGMTVMSITTVLSLVLTIFLSA) are cleaved as a propeptide — removed in mature form.

This sequence belongs to the early nodulin-like (ENODL) family. Mostly expressed in leaves and roots, and, to a lower extent, in seedlings, stems and flowers, but barely in seeds.

It is found in the cell membrane. In terms of biological role, may act as a carbohydrate transporter. This Arabidopsis thaliana (Mouse-ear cress) protein is Early nodulin-like protein 2.